Consider the following 362-residue polypeptide: NAD(P)H-quinone oxidoreductase subunit 1, chloroplastic (362 aa).

A run of 7 helical transmembrane segments spans residues 26–48 (LIWI…VIVW), 97–119 (FSIG…PLGY), 126–148 (LSIG…LMAG), 163–185 (AAAQ…SLLS), 254–276 (LFYL…LYLG), 296–318 (IIGI…LFLF), and 338–360 (LGWK…FQLV).

Belongs to the complex I subunit 1 family. NDH is composed of at least 16 different subunits, 5 of which are encoded in the nucleus.

The protein resides in the plastid. It localises to the chloroplast thylakoid membrane. The enzyme catalyses a plastoquinone + NADH + (n+1) H(+)(in) = a plastoquinol + NAD(+) + n H(+)(out). It carries out the reaction a plastoquinone + NADPH + (n+1) H(+)(in) = a plastoquinol + NADP(+) + n H(+)(out). Its function is as follows. NDH shuttles electrons from NAD(P)H:plastoquinone, via FMN and iron-sulfur (Fe-S) centers, to quinones in the photosynthetic chain and possibly in a chloroplast respiratory chain. The immediate electron acceptor for the enzyme in this species is believed to be plastoquinone. Couples the redox reaction to proton translocation, and thus conserves the redox energy in a proton gradient. The polypeptide is NAD(P)H-quinone oxidoreductase subunit 1, chloroplastic (ndhA) (Zea mays (Maize)).